The primary structure comprises 155 residues: Endoribonuclease YbeY (155 aa).

Residues H120, H124, and H130 each contribute to the Zn(2+) site.

This sequence belongs to the endoribonuclease YbeY family. It depends on Zn(2+) as a cofactor.

It localises to the cytoplasm. Its function is as follows. Single strand-specific metallo-endoribonuclease involved in late-stage 70S ribosome quality control and in maturation of the 3' terminus of the 16S rRNA. This Staphylococcus aureus (strain Mu3 / ATCC 700698) protein is Endoribonuclease YbeY.